Here is a 380-residue protein sequence, read N- to C-terminus: Anthranilate phosphoribosyltransferase (380 aa).

5-phospho-alpha-D-ribose 1-diphosphate is bound by residues glycine 109, asparagine 119, serine 121, threonine 122, lysine 142, serine 144, and serine 146. Mg(2+) is bound by residues aspartate 258 and glutamate 259.

The protein belongs to the anthranilate phosphoribosyltransferase family. As to quaternary structure, homodimer. Mg(2+) serves as cofactor.

The enzyme catalyses N-(5-phospho-beta-D-ribosyl)anthranilate + diphosphate = 5-phospho-alpha-D-ribose 1-diphosphate + anthranilate. It functions in the pathway amino-acid biosynthesis; L-tryptophan biosynthesis; L-tryptophan from chorismate: step 2/5. Catalyzes the transfer of the phosphoribosyl group of 5-phosphorylribose-1-pyrophosphate (PRPP) to anthranilate to yield N-(5'-phosphoribosyl)-anthranilate (PRA), the second step in tryptophan biosynthesis. The sequence is that of Anthranilate phosphoribosyltransferase from Saccharomyces cerevisiae (strain ATCC 204508 / S288c) (Baker's yeast).